Consider the following 557-residue polypeptide: Dicarboxylate transporter 1, chloroplastic (557 aa).

The transit peptide at 1–69 (MASLALSGSC…STLVKASSTV (69 aa)) directs the protein to the chloroplast. 12 helical membrane passes run 90–110 (AAIK…FVPV), 122–142 (LAIF…LGAV), 158–178 (FAAA…LAFF), 229–249 (AGGI…SNVG), 256–276 (LGSW…SMFL), 305–325 (AAIV…YLIY), 355–375 (IMAA…KLGV), 376–396 (DAVT…VVTW), 411–431 (WFAA…IEWF), 438–458 (FVGG…LLYF), 477–497 (AFLS…LVLA), and 531–551 (YGFL…GAWW).

Belongs to the SLC13A/DASS transporter (TC 2.A.47) family. DIT1 subfamily. In terms of tissue distribution, expressed in roots, rosette and cauline leaves, stems, flowers and siliques.

The protein resides in the plastid. It is found in the chloroplast inner membrane. 2-oxoglutarate/malate translocator involved with DIT2-1 in primary ammonia assimilation and in the re-assimilation of ammonia generated by the photorespiratory pathway. Imports 2-oxoglutarate into plastids as precursor for ammonia assimilation. 2-oxoglutarate is converted to glutamate, the end product of ammonia assimilation, which is exported to the cytosol by DIT2-1. The sequence is that of Dicarboxylate transporter 1, chloroplastic (DIT1) from Arabidopsis thaliana (Mouse-ear cress).